The sequence spans 404 residues: Acetate kinase (404 aa).

Residue Asn7 participates in Mg(2+) binding. Residue Lys14 coordinates ATP. Arg95 contacts substrate. The Proton donor/acceptor role is filled by Asp152. ATP is bound by residues 212–216, 286–288, and 334–338; these read HLGNG, DMR, and GIGEN. Residue Glu388 participates in Mg(2+) binding.

It belongs to the acetokinase family. In terms of assembly, homodimer. Mg(2+) is required as a cofactor. The cofactor is Mn(2+).

It is found in the cytoplasm. It catalyses the reaction acetate + ATP = acetyl phosphate + ADP. The protein operates within metabolic intermediate biosynthesis; acetyl-CoA biosynthesis; acetyl-CoA from acetate: step 1/2. In terms of biological role, catalyzes the formation of acetyl phosphate from acetate and ATP. Can also catalyze the reverse reaction. The sequence is that of Acetate kinase from Nitratidesulfovibrio vulgaris (strain DSM 19637 / Miyazaki F) (Desulfovibrio vulgaris).